The chain runs to 207 residues: Glutathione S-transferase 4 (207 aa).

Residues proline 2–glycine 79 enclose the GST N-terminal domain. Residues tyrosine 8, tryptophan 39, lysine 43, glycine 49–leucine 51, and glutamine 63–serine 64 contribute to the glutathione site. Residues threonine 81 to valine 207 form the GST C-terminal domain.

The protein belongs to the GST superfamily. Sigma family.

The enzyme catalyses RX + glutathione = an S-substituted glutathione + a halide anion + H(+). Its function is as follows. Conjugation of reduced glutathione to a wide number of exogenous and endogenous hydrophobic electrophiles. May play a role in the detoxification of reactive oxygen species produced during pathogenic bacterial infection. The polypeptide is Glutathione S-transferase 4 (Caenorhabditis elegans).